Reading from the N-terminus, the 645-residue chain is Cyclic nucleotide-gated channel rod photoreceptor subunit alpha (645 aa).

Residues 1-121 (MKVGVIETHH…PAGNMYYNWL (121 aa)) lie on the Cytoplasmic side of the membrane. The segment at 53-100 (NNNSNKDEEKKKKKEKKSKSENKKDGERQKNKEKKEKHKNKDKKKGKE) is disordered. Residues 70–86 (SKSENKKDGERQKNKEK) show a composition bias toward basic and acidic residues. Positions 87 to 96 (KEKHKNKDKK) are enriched in basic residues. Residues 122–143 (FCITMPVMYNWTMIIARACFDE) form a helical membrane-spanning segment. Topologically, residues 144–153 (LQNDYLAVWF) are extracellular. Residues 154 to 174 (IVDYVSDVIYIADMFVRTRTG) form a helical membrane-spanning segment. Residues 175–199 (YLEQGLLVKEEQKLKEKYKSSLQFK) are Cytoplasmic-facing. The chain crosses the membrane as a helical span at residues 200–218 (LDFLSIIPTDLLYFKLGLN). Residues 219–223 (YPELR) lie on the Extracellular side of the membrane. Residues 224–242 (INRLLRVARMFEFFQRTET) traverse the membrane as a helical segment. Over 243–249 (RTNYPNI) the chain is Cytoplasmic. Residues 250–273 (FRISNLVMYIVIIIHWNACVYYSI) traverse the membrane as a helical segment. The Extracellular portion of the chain corresponds to 274–296 (SKAIGFGADTWVYPNTSHPEFAR). The next 2 membrane-spanning stretches (helical) occupy residues 297–331 (LTRKYVYSLYWSTLTLTTIGETPPPVRDSEYFFVV) and 332–356 (VDFLVGVLIFATIVGNVGSMISNMN). At 357–645 (AARAEFQAKI…TDKPGVTKTE (289 aa)) the chain is on the cytoplasmic side. 3',5'-cyclic GMP contacts are provided by residues 439–561 (LLVE…DGLL), Glu-498, and Arg-513.

The protein belongs to the cyclic nucleotide-gated cation channel (TC 1.A.1.5) family.

It is found in the membrane. Functionally, visual signal transduction is mediated by a G-protein coupled cascade using cGMP as second messenger. This protein can be activated by cGMP which leads to an opening of the cation channel and thereby causing a depolarization of rod photoreceptors. In Gallus gallus (Chicken), this protein is Cyclic nucleotide-gated channel rod photoreceptor subunit alpha.